A 292-amino-acid polypeptide reads, in one-letter code: Homoserine kinase (292 aa).

Position 84–94 (P84–A94) interacts with ATP.

This sequence belongs to the GHMP kinase family. Homoserine kinase subfamily.

Its subcellular location is the cytoplasm. It carries out the reaction L-homoserine + ATP = O-phospho-L-homoserine + ADP + H(+). It functions in the pathway amino-acid biosynthesis; L-threonine biosynthesis; L-threonine from L-aspartate: step 4/5. In terms of biological role, catalyzes the ATP-dependent phosphorylation of L-homoserine to L-homoserine phosphate. The polypeptide is Homoserine kinase (Thermus thermophilus (strain ATCC 27634 / DSM 579 / HB8)).